We begin with the raw amino-acid sequence, 132 residues long: Small ribosomal subunit protein uS11 (132 aa).

The protein belongs to the universal ribosomal protein uS11 family. In terms of assembly, part of the 30S ribosomal subunit. Interacts with proteins S7 and S18. Binds to IF-3.

Its function is as follows. Located on the platform of the 30S subunit, it bridges several disparate RNA helices of the 16S rRNA. Forms part of the Shine-Dalgarno cleft in the 70S ribosome. The polypeptide is Small ribosomal subunit protein uS11 (Clostridium botulinum (strain 657 / Type Ba4)).